The following is a 1161-amino-acid chain: Lethal(2) giant larvae protein (1161 aa).

A phospho-regulated basic and hydrophobic (PRBH) motif region spans residues 15-86; sequence DRHRLQKDLF…NNSASELNVQ (72 aa). 8 WD repeats span residues 39 to 72, 82 to 128, 131 to 167, 189 to 223, 231 to 263, 278 to 320, 328 to 358, and 380 to 464; these read SALA…LYGQ, ELNV…DGKL, VSSL…EPVI, SIRQ…QRAY, SVGL…PEPP, SINR…GHKV, VIDF…AYDL, and TCNY…YNFK. Phosphoserine is present on residues serine 473 and serine 484. WD repeat units follow at residues 513–594 and 603–664; these read KKIA…SGVL and TCMA…LRES. Serine 679 is subject to Phosphoserine. 4 WD repeats span residues 708-778, 787-832, 837-927, and 941-964; these read VRCL…KEIQ, GISI…LKPI, LTAN…LNAA, and CFTN…ALAT. Phosphoserine is present on residues serine 808, serine 869, serine 876, serine 887, serine 889, and serine 893. Serine 1013 bears the Phosphoserine mark. The segment at 1141–1161 is disordered; sequence EKTNGDNKIGTPKTAPEESQF.

It belongs to the WD repeat L(2)GL family. May form multimeric complexes. Interacts with mahj. Interacts with aPKC; leading to phosphorylation. Interacts with ball. In terms of processing, phosphorylated by aPKC which lowers lipid affinity and promotes dissociation from the cell cortex. In developing oocytes, aPKC-mediated phosphorylation restricts activity to the oocyte posterior and is required for oocyte polarity formation. In terms of tissue distribution, expressed in the epithelial cells of the digestive tract and in gonads.

It is found in the cytoplasm. It localises to the cell cortex. Essential for the development of polarized epithelia, for cell polarity associated with asymmetric cell division of neuroblasts during development, and for oocyte polarity formation. Promotes the formation of actin-rich projections at the oocyte cortex and the posterior enrichment of par-1 which is required for oocyte polarization. Regulates the localization of axis-specifying morphogens such as stau and grk. Functionally, has an essential role in control of cell proliferation and differentiation during development and could act as a tumor suppressor. In terms of biological role, has an accessory function in control of cell proliferation and differentiation during development. The protein is Lethal(2) giant larvae protein (l(2)gl) of Drosophila melanogaster (Fruit fly).